A 410-amino-acid chain; its full sequence is Multifunctional CCA protein (410 aa).

Residues Gly-8 and Arg-11 each coordinate ATP. 2 residues coordinate CTP: Gly-8 and Arg-11. 2 residues coordinate Mg(2+): Glu-21 and Asp-23. ATP is bound by residues Arg-91, Arg-137, and Arg-140. CTP is bound by residues Arg-91, Arg-137, and Arg-140. The HD domain occupies 228-329 (TGIHSLMTLR…VKLLEQVDAF (102 aa)).

It belongs to the tRNA nucleotidyltransferase/poly(A) polymerase family. Bacterial CCA-adding enzyme type 1 subfamily. Monomer. Can also form homodimers and oligomers. Mg(2+) is required as a cofactor. It depends on Ni(2+) as a cofactor.

It carries out the reaction a tRNA precursor + 2 CTP + ATP = a tRNA with a 3' CCA end + 3 diphosphate. The catalysed reaction is a tRNA with a 3' CCA end + 2 CTP + ATP = a tRNA with a 3' CCACCA end + 3 diphosphate. Its function is as follows. Catalyzes the addition and repair of the essential 3'-terminal CCA sequence in tRNAs without using a nucleic acid template. Adds these three nucleotides in the order of C, C, and A to the tRNA nucleotide-73, using CTP and ATP as substrates and producing inorganic pyrophosphate. tRNA 3'-terminal CCA addition is required both for tRNA processing and repair. Also involved in tRNA surveillance by mediating tandem CCA addition to generate a CCACCA at the 3' terminus of unstable tRNAs. While stable tRNAs receive only 3'-terminal CCA, unstable tRNAs are marked with CCACCA and rapidly degraded. This Legionella pneumophila subsp. pneumophila (strain Philadelphia 1 / ATCC 33152 / DSM 7513) protein is Multifunctional CCA protein.